We begin with the raw amino-acid sequence, 479 residues long: Bifunctional AAC/APH (479 aa).

The N-acetyltransferase domain occupies 8 to 180 (ICIRTLIDDD…DCYLMEYRYD (173 aa)). The tract at residues 110–153 (KGIGTRYIKLIFEFLKKERNANAVILDPHKNNPRAIRAYQKSGF) is acetyl-CoA binding site. Aspartate 374 (proton acceptor; for phosphotransferase activity) is an active-site residue. Aspartate 393 is an a gentamycin binding site.

The protein in the C-terminal section; belongs to the aminoglycoside phosphotransferase family.

The protein resides in the cytoplasm. It carries out the reaction a gentamycin + GTP = a gentamycin 2''-phosphate + GDP + H(+). Functionally, involved in resistance to gentamicin, tobramycin, and kanamycin. Tobramycin and kanamycin resistance is due to the ACC activity, specified by N-terminal region. The C-terminal region is a kinase that phosphorylates several 4,6-disubstituted aminoglycosides. The sequence is that of Bifunctional AAC/APH (aacA-aphD) from Enterococcus faecalis (strain ATCC 700802 / V583).